Reading from the N-terminus, the 285-residue chain is Bifunctional protein FolD (285 aa).

NADP(+)-binding positions include 164 to 166 (GRS), Ser189, and Ile230.

The protein belongs to the tetrahydrofolate dehydrogenase/cyclohydrolase family. As to quaternary structure, homodimer.

The catalysed reaction is (6R)-5,10-methylene-5,6,7,8-tetrahydrofolate + NADP(+) = (6R)-5,10-methenyltetrahydrofolate + NADPH. The enzyme catalyses (6R)-5,10-methenyltetrahydrofolate + H2O = (6R)-10-formyltetrahydrofolate + H(+). It functions in the pathway one-carbon metabolism; tetrahydrofolate interconversion. Functionally, catalyzes the oxidation of 5,10-methylenetetrahydrofolate to 5,10-methenyltetrahydrofolate and then the hydrolysis of 5,10-methenyltetrahydrofolate to 10-formyltetrahydrofolate. This chain is Bifunctional protein FolD, found in Oceanobacillus iheyensis (strain DSM 14371 / CIP 107618 / JCM 11309 / KCTC 3954 / HTE831).